The following is a 316-amino-acid chain: Cuticle collagen 7 (316 aa).

Residues 1-34 (MSSATFLSVMAGLSGIVVFGALISVFHIYSDINS) form the signal peptide. Disordered regions lie at residues 78–269 (KQSQ…DAAY) and 281–316 (HRNVNRHRAAASKKRVVAKKRVAKKRVVAARRHVQA). The span at 79-90 (QSQCNCGQQASN) shows a compositional bias: polar residues. 3 triple-helical region regions span residues 94–126 (GPPGPPGASGDKGHDGQPGQAGKPGQPGVAGPS), 139–198 (GLPG…PGKS), and 204–263 (GLPG…DGTP). Composition is skewed to low complexity over residues 110 to 125 (QPGQAGKPGQPGVAGP), 137 to 147 (PQGLPGPAGVP), and 177 to 198 (AGSAGSPGQAGAPGNPGSPGKS). Over residues 209-221 (SGAPGPQGPPGAP) the composition is skewed to pro residues. A compositionally biased stretch (low complexity) spans 241–260 (PNGQPGHPGQDGQPGAPGND).

This sequence belongs to the cuticular collagen family. As to quaternary structure, collagen polypeptide chains are complexed within the cuticle by disulfide bonds and other types of covalent cross-links.

Nematode cuticles are composed largely of collagen-like proteins. The cuticle functions both as an exoskeleton and as a barrier to protect the worm from its environment. The protein is Cuticle collagen 7 (col-7) of Caenorhabditis elegans.